The sequence spans 156 residues: Probable histone H2A.6 (156 aa).

Disordered regions lie at residues 1-26 and 129-156; these read MDVG…KKPV and KKTA…QARS. Positions 9-26 are enriched in basic residues; sequence AAKKAVGRKLGGPKKKPV. A compositionally biased stretch (basic and acidic residues) spans 130-147; that stretch reads KTAEKADKPAKASKDKAA. An SPKK motif motif is present at residues 149–152; it reads SPKK.

The protein belongs to the histone H2A family. As to quaternary structure, the nucleosome is a histone octamer containing two molecules each of H2A, H2B, H3 and H4 assembled in one H3-H4 heterotetramer and two H2A-H2B heterodimers. The octamer wraps approximately 147 bp of DNA.

The protein resides in the nucleus. Its subcellular location is the chromosome. Its function is as follows. Core component of nucleosome. Nucleosomes wrap and compact DNA into chromatin, limiting DNA accessibility to the cellular machineries which require DNA as a template. Histones thereby play a central role in transcription regulation, DNA repair, DNA replication and chromosomal stability. DNA accessibility is regulated via a complex set of post-translational modifications of histones, also called histone code, and nucleosome remodeling. This Oryza sativa subsp. indica (Rice) protein is Probable histone H2A.6.